A 985-amino-acid chain; its full sequence is Bifunctional glutamine synthetase adenylyltransferase/adenylyl-removing enzyme (985 aa).

The segment at 1-472 is adenylyl removase; that stretch reads MTSSAPGNAD…HYARLFEGDP (472 aa). The segment at 477-985 is adenylyl transferase; that stretch reads SLPPVNYGAG…RRVFTSLLEE (509 aa).

The protein belongs to the GlnE family. Mg(2+) is required as a cofactor.

The enzyme catalyses [glutamine synthetase]-O(4)-(5'-adenylyl)-L-tyrosine + phosphate = [glutamine synthetase]-L-tyrosine + ADP. The catalysed reaction is [glutamine synthetase]-L-tyrosine + ATP = [glutamine synthetase]-O(4)-(5'-adenylyl)-L-tyrosine + diphosphate. Functionally, involved in the regulation of glutamine synthetase GlnA, a key enzyme in the process to assimilate ammonia. When cellular nitrogen levels are high, the C-terminal adenylyl transferase (AT) inactivates GlnA by covalent transfer of an adenylyl group from ATP to specific tyrosine residue of GlnA, thus reducing its activity. Conversely, when nitrogen levels are low, the N-terminal adenylyl removase (AR) activates GlnA by removing the adenylyl group by phosphorolysis, increasing its activity. The regulatory region of GlnE binds the signal transduction protein PII (GlnB) which indicates the nitrogen status of the cell. This chain is Bifunctional glutamine synthetase adenylyltransferase/adenylyl-removing enzyme, found in Bradyrhizobium sp. (strain BTAi1 / ATCC BAA-1182).